Consider the following 850-residue polypeptide: Receptor-like serine/threonine-protein kinase SD1-8 (850 aa).

The signal sequence occupies residues 1 to 26 (MRGLPNFYHSYTFFFFFLLILFPAYS). Residues 27–441 (ISANTLSASE…LEDKRNRSAK (415 aa)) lie on the Extracellular side of the membrane. The 123-residue stretch at 31–153 (TLSASESLTI…KNSAPDGVLW (123 aa)) folds into the Bulb-type lectin domain. Asn-43, Asn-118, and Asn-242 each carry an N-linked (GlcNAc...) asparagine glycan. In terms of domain architecture, EGF-like spans 292–328 (PKDQCDEYKECGVYGYCDSNTSPVCNCIKGFKPRNPQ). 4 disulfides stabilise this stretch: Cys-296–Cys-308, Cys-302–Cys-316, Cys-378–Cys-403, and Cys-382–Cys-388. Residues 347–428 (CGGGDGFVRL…GGQDLYVRLA (82 aa)) enclose the PAN domain. Residues Asn-387 and Asn-437 are each glycosylated (N-linked (GlcNAc...) asparagine). A helical transmembrane segment spans residues 442 to 462 (IIGSSIGVSVLLLLSFIIFFL). Topologically, residues 463–850 (WKRKQKRSIL…QITVSVLDAR (388 aa)) are cytoplasmic. Positions 526–807 (FSNANKLGQG…LMLGSESTTI (282 aa)) constitute a Protein kinase domain. Residues 532–540 (LGQGGFGIV) and Lys-554 contribute to the ATP site. A caM-binding region spans residues 615–632 (SRNSKLNWQMRFDIINGI). The Proton acceptor role is filled by Asp-651.

Belongs to the protein kinase superfamily. Ser/Thr protein kinase family. As to quaternary structure, interacts with PUB9, PUB13, PUB14 and PUB38. As to expression, expressed in the root-hypocotyl transition zone, at the base of lateral roots, axillary buds and pedicels.

Its subcellular location is the cell membrane. It carries out the reaction L-seryl-[protein] + ATP = O-phospho-L-seryl-[protein] + ADP + H(+). The catalysed reaction is L-threonyl-[protein] + ATP = O-phospho-L-threonyl-[protein] + ADP + H(+). Involved in the regulation of cellular expansion and differentiation. The chain is Receptor-like serine/threonine-protein kinase SD1-8 (SD18) from Arabidopsis thaliana (Mouse-ear cress).